Reading from the N-terminus, the 480-residue chain is Glutamyl-tRNA(Gln) amidotransferase subunit A (480 aa).

Catalysis depends on charge relay system residues Lys76 and Ser151. Ser175 acts as the Acyl-ester intermediate in catalysis.

It belongs to the amidase family. GatA subfamily. In terms of assembly, heterotrimer of A, B and C subunits.

It catalyses the reaction L-glutamyl-tRNA(Gln) + L-glutamine + ATP + H2O = L-glutaminyl-tRNA(Gln) + L-glutamate + ADP + phosphate + H(+). In terms of biological role, allows the formation of correctly charged Gln-tRNA(Gln) through the transamidation of misacylated Glu-tRNA(Gln) in organisms which lack glutaminyl-tRNA synthetase. The reaction takes place in the presence of glutamine and ATP through an activated gamma-phospho-Glu-tRNA(Gln). This Exiguobacterium sibiricum (strain DSM 17290 / CCUG 55495 / CIP 109462 / JCM 13490 / 255-15) protein is Glutamyl-tRNA(Gln) amidotransferase subunit A.